We begin with the raw amino-acid sequence, 105 residues long: uncharacterized protein (105 aa).

The region spanning 14-104 is the ABM domain; it reads HYITACLKII…VEWLMKSNVN (91 aa).

This is an uncharacterized protein from Bacillus subtilis (strain 168).